A 25-amino-acid chain; its full sequence is MXPARALIDLQALRHNYQLAAEVIG.

It belongs to the alanine racemase family. Homodimer. Pyridoxal 5'-phosphate is required as a cofactor.

The enzyme catalyses L-alanine = D-alanine. It participates in amino-acid biosynthesis; D-alanine biosynthesis; D-alanine from L-alanine: step 1/1. Catalyzes the interconversion of L-alanine and D-alanine. In Pseudomonas fluorescens, this protein is Alanine racemase.